A 141-amino-acid chain; its full sequence is uncharacterized protein (141 aa).

The segment at 1-101 (FRGRAPRPLV…PDPGRSRRAT (101 aa)) is disordered. The segment covering 27-70 (QVRDCGREGDLRAGKAADRRLPRARETCSRFGEGVRQKDVHKGP) has biased composition (basic and acidic residues).

This is an uncharacterized protein from Dhori virus (strain Indian/1313/61) (Dho).